The primary structure comprises 432 residues: Amino-acid acetyltransferase (432 aa).

The N-acetyltransferase domain occupies 286-425 (EKLREATIED…ASLYNYQRQS (140 aa)).

Belongs to the acetyltransferase family. ArgA subfamily.

The protein localises to the cytoplasm. It carries out the reaction L-glutamate + acetyl-CoA = N-acetyl-L-glutamate + CoA + H(+). It functions in the pathway amino-acid biosynthesis; L-arginine biosynthesis; N(2)-acetyl-L-ornithine from L-glutamate: step 1/4. This is Amino-acid acetyltransferase from Azotobacter vinelandii (strain DJ / ATCC BAA-1303).